A 660-amino-acid polypeptide reads, in one-letter code: Bifunctional polymyxin resistance protein ArnA (660 aa).

The formyltransferase ArnAFT stretch occupies residues 1-304; sequence MKAIVFAYHD…EMGIVTDVRL (304 aa). H104 acts as the Proton donor; for formyltransferase activity in catalysis. Residues R114 and 136 to 140 contribute to the (6R)-10-formyltetrahydrofolate site; that span reads VKRPD. A dehydrogenase ArnADH region spans residues 314–660; sequence RRTRVLILGV…RTTVQEGDGA (347 aa). NAD(+) is bound by residues D347 and 368–369; that span reads DI. Residues A393, Y398, and 432–433 each bind UDP-alpha-D-glucuronate; that span reads TS. E434 serves as the catalytic Proton acceptor; for decarboxylase activity. Residues R460, N492, 526-535, and Y613 contribute to the UDP-alpha-D-glucuronate site; that span reads KLMDGGAQKR. R619 serves as the catalytic Proton donor; for decarboxylase activity.

In the N-terminal section; belongs to the Fmt family. UDP-L-Ara4N formyltransferase subfamily. The protein in the C-terminal section; belongs to the NAD(P)-dependent epimerase/dehydratase family. UDP-glucuronic acid decarboxylase subfamily. As to quaternary structure, homohexamer, formed by a dimer of trimers.

The catalysed reaction is UDP-alpha-D-glucuronate + NAD(+) = UDP-beta-L-threo-pentopyranos-4-ulose + CO2 + NADH. It catalyses the reaction UDP-4-amino-4-deoxy-beta-L-arabinose + (6R)-10-formyltetrahydrofolate = UDP-4-deoxy-4-formamido-beta-L-arabinose + (6S)-5,6,7,8-tetrahydrofolate + H(+). It functions in the pathway nucleotide-sugar biosynthesis; UDP-4-deoxy-4-formamido-beta-L-arabinose biosynthesis; UDP-4-deoxy-4-formamido-beta-L-arabinose from UDP-alpha-D-glucuronate: step 1/3. It participates in nucleotide-sugar biosynthesis; UDP-4-deoxy-4-formamido-beta-L-arabinose biosynthesis; UDP-4-deoxy-4-formamido-beta-L-arabinose from UDP-alpha-D-glucuronate: step 3/3. Its pathway is bacterial outer membrane biogenesis; lipopolysaccharide biosynthesis. Functionally, bifunctional enzyme that catalyzes the oxidative decarboxylation of UDP-glucuronic acid (UDP-GlcUA) to UDP-4-keto-arabinose (UDP-Ara4O) and the addition of a formyl group to UDP-4-amino-4-deoxy-L-arabinose (UDP-L-Ara4N) to form UDP-L-4-formamido-arabinose (UDP-L-Ara4FN). The modified arabinose is attached to lipid A and is required for resistance to polymyxin and cationic antimicrobial peptides. This is Bifunctional polymyxin resistance protein ArnA from Serratia proteamaculans (strain 568).